The primary structure comprises 353 residues: UDP-3-O-acylglucosamine N-acyltransferase (353 aa).

Histidine 242 serves as the catalytic Proton acceptor.

The protein belongs to the transferase hexapeptide repeat family. LpxD subfamily. As to quaternary structure, homotrimer.

It catalyses the reaction a UDP-3-O-[(3R)-3-hydroxyacyl]-alpha-D-glucosamine + a (3R)-hydroxyacyl-[ACP] = a UDP-2-N,3-O-bis[(3R)-3-hydroxyacyl]-alpha-D-glucosamine + holo-[ACP] + H(+). It participates in bacterial outer membrane biogenesis; LPS lipid A biosynthesis. Functionally, catalyzes the N-acylation of UDP-3-O-acylglucosamine using 3-hydroxyacyl-ACP as the acyl donor. Is involved in the biosynthesis of lipid A, a phosphorylated glycolipid that anchors the lipopolysaccharide to the outer membrane of the cell. The chain is UDP-3-O-acylglucosamine N-acyltransferase from Pseudomonas aeruginosa (strain LESB58).